We begin with the raw amino-acid sequence, 365 residues long: Oligosaccharides import ATP-binding protein MsmX (365 aa).

In terms of domain architecture, ABC transporter spans 4–235 (LRMEHIYKFY…PENVFVGGFI (232 aa)). An ATP-binding site is contributed by 37–44 (GPSGCGKS).

The protein belongs to the ABC transporter superfamily. The complex involved in maltodextrin import is composed of two ATP-binding proteins (MsmX), two transmembrane proteins (MdxF and MdxG) and a solute-binding protein (MdxE). The complex involved in arabinooligosaccharides uptake is composed of two ATP-binding proteins (MsmX), two transmembrane proteins (AraP and AraQ) and a solute-binding protein (AraN). The complex involved in galactooligosaccharides uptake is composed of two ATP-binding proteins (MsmX), two transmembrane proteins (GanP and GanQ) and a solute-binding protein (GanS). The complex involved in melibiose, raffinose and stachyose import is composed of two ATP-binding proteins (MsmX), two transmembrane proteins (MelC and MelD) and a solute-binding protein (MelE). The complex involved in polygalacturonan and rhamnogalacturonan type I uptake is probably composed of two ATP-binding proteins (MsmX), two transmembrane proteins (YtcP and YteP) and a solute-binding protein (YtcQ).

It localises to the cell membrane. In terms of biological role, required to energize different ABC-type saccharide transporters. Part of the MdxEFG-MsmX ABC transporter complex involved in maltodextrin import, of the AraNPQ-MsmX complex involved in arabinooligosaccharides import, of the GanPQS-MsmX complex involved in galactooligosaccharides import, and of the MelEDC-MsmX complex involved in melibiose, raffinose and stachyose import. Is probably also part of the ABC transporter complex YtcQP-YteP-MsmX involved in polygalacturonan and rhamnogalacturonan type I import during pectin degradation. Responsible for energy coupling to the transport system. The sequence is that of Oligosaccharides import ATP-binding protein MsmX (msmX) from Bacillus subtilis (strain 168).